The following is a 278-amino-acid chain: UPF0750 membrane protein YxkD (278 aa).

5 consecutive transmembrane segments (helical) span residues 8–28, 46–66, 77–97, 101–121, and 145–165; these read VLMLVIGAFFFALAVNLFAIP, LFQWSPGVTNFILNAFLLLIG, YTIIAVAANSLFLHLTHGWSI, ELIINTIFAGVFAGVGIGMII, and ISYALLFFDLIVVFSSYFIIG.

The protein belongs to the UPF0750 family.

It localises to the cell membrane. This chain is UPF0750 membrane protein YxkD (yxkD), found in Bacillus subtilis (strain 168).